The chain runs to 430 residues: Adenylosuccinate synthetase (430 aa).

Residues 11–17 (GDEGKGK) and 39–41 (GHS) contribute to the GTP site. The active-site Proton acceptor is Asp12. Residues Asp12 and Gly39 each contribute to the Mg(2+) site. Residues 12–15 (DEGK), 37–40 (NAGH), Thr129, Arg143, Asn221, Thr236, and Arg300 each bind IMP. The active-site Proton donor is the His40. 296-302 (VSTGRKR) is a binding site for substrate. Residues Arg302, 328 to 330 (KLD), and 412 to 414 (GTG) contribute to the GTP site.

It belongs to the adenylosuccinate synthetase family. Homodimer. Mg(2+) is required as a cofactor.

It is found in the cytoplasm. The catalysed reaction is IMP + L-aspartate + GTP = N(6)-(1,2-dicarboxyethyl)-AMP + GDP + phosphate + 2 H(+). It participates in purine metabolism; AMP biosynthesis via de novo pathway; AMP from IMP: step 1/2. Plays an important role in the de novo pathway and in the salvage pathway of purine nucleotide biosynthesis. Catalyzes the first committed step in the biosynthesis of AMP from IMP. The protein is Adenylosuccinate synthetase of Neurospora crassa (strain ATCC 24698 / 74-OR23-1A / CBS 708.71 / DSM 1257 / FGSC 987).